The sequence spans 284 residues: RNase adapter protein RapZ (284 aa).

8–15 contacts ATP; it reads GRSGSGKS. 56-59 is a binding site for GTP; it reads DVRN. The interval 266–284 is RNA-binding; sequence RSRGKNAQSRHRTLEKSKS.

Belongs to the RapZ-like family. RapZ subfamily. Homotrimer.

Functionally, modulates the synthesis of GlmS, by affecting the processing and stability of the regulatory small RNA GlmZ. When glucosamine-6-phosphate (GlcN6P) concentrations are high in the cell, RapZ binds GlmZ and targets it to cleavage by RNase E. Consequently, GlmZ is inactivated and unable to activate GlmS synthesis. Under low GlcN6P concentrations, RapZ is sequestered and inactivated by an other regulatory small RNA, GlmY, preventing GlmZ degradation and leading to synthesis of GlmS. The protein is RNase adapter protein RapZ of Sodalis glossinidius (strain morsitans).